Reading from the N-terminus, the 478-residue chain is Catalase easC (478 aa).

His-54 is an active-site residue. Heme is bound at residue Tyr-343. Residues 459–478 (VAEKARPDSPSRAQPGQLRL) form a disordered region.

The protein belongs to the catalase family. It depends on heme as a cofactor.

Its pathway is alkaloid biosynthesis; ergot alkaloid biosynthesis. Its function is as follows. Catalase; part of the gene cluster that mediates the biosynthesis of fungal ergot alkaloid. DmaW catalyzes the first step of ergot alkaloid biosynthesis by condensing dimethylallyl diphosphate (DMAP) and tryptophan to form 4-dimethylallyl-L-tryptophan. The second step is catalyzed by the methyltransferase easF that methylates 4-dimethylallyl-L-tryptophan in the presence of S-adenosyl-L-methionine, resulting in the formation of 4-dimethylallyl-L-abrine. The catalase easC and the FAD-dependent oxidoreductase easE then transform 4-dimethylallyl-L-abrine to chanoclavine-I which is further oxidized by easD in the presence of NAD(+), resulting in the formation of chanoclavine-I aldehyde. Chanoclavine-I aldehyde is the precursor of ergoamides and ergopeptines in Clavicipitaceae, and clavine-type alcaloids such as fumiclavine in Trichocomaceae. However, the metabolites downstream of chanoclavine-I aldehyde in Arthrodermataceae have not been identified yet. The polypeptide is Catalase easC (Arthroderma benhamiae (strain ATCC MYA-4681 / CBS 112371) (Trichophyton mentagrophytes)).